The sequence spans 541 residues: MESYRGLWLKGAIVMALNMYEAGLTPVEIGLGERDFYIDVQSDSALSLQESEKFAQWKDHKYEIKDGKVTYNGKQILLQGDVTPSGEPRYFKVLNISVHHPSANVQLVRIRGIAFETKEQMDDYLQWLEKASETDHRIIGERMDLFSFHEESGPGLVLFHPKGQLIRNEMINYMREINASMGYQEVYTSHVFRTVLWKISGHYDTYRDKMLIFQKDDDELGIKPMNCPAHILIYKSRVRSYRDLPIRFSEFGNVYRWEKKGELYGLLRTRGFTQDDGHIFLREDQLKDEVKNLVRKTLDVLGKFGFKGEDVRINLSTRPDESIGSDEQWEKATKALLDVLKELNVPYVVKEKEGAFYGPKIDFDIRDSLNRWWQLSTIQVDFNLPERFKLEYVDEDGSKKRPVMVHRAIYGSLDRMIAILLEHFRGKLPTWLSPVQVRVLPISEDNLDYAKRVMDVLVQRGIRTEIDPSGETLSKRIKRGYDDGVPYLVIVGRKEASEEKVTIRARGNVEIKGVPLSRFVDELSLEIGNRDAENTLIKRIG.

The interval 135–429 (DHRIIGERMD…LLEHFRGKLP (295 aa)) is catalytic. Residues Cys227, His278, and His406 each coordinate Zn(2+).

The protein belongs to the class-II aminoacyl-tRNA synthetase family. In terms of assembly, homodimer. Probably interacts with its editing subunit. It depends on Zn(2+) as a cofactor.

The protein resides in the cytoplasm. The enzyme catalyses tRNA(Thr) + L-threonine + ATP = L-threonyl-tRNA(Thr) + AMP + diphosphate + H(+). Catalyzes the attachment of threonine to tRNA(Thr) in a two-step reaction: L-threonine is first activated by ATP to form Thr-AMP and then transferred to the acceptor end of tRNA(Thr). Also activates L-serine and transfers it to tRNA(Thr) but cannot deacylate incorrectly charged amino acid; unlike most archaea the editing function is found in a freestanding protein. The chain is Threonine--tRNA ligase catalytic subunit from Metallosphaera sedula (strain ATCC 51363 / DSM 5348 / JCM 9185 / NBRC 15509 / TH2).